A 218-amino-acid polypeptide reads, in one-letter code: Large ribosomal subunit protein uL3 (218 aa).

This sequence belongs to the universal ribosomal protein uL3 family. Part of the 50S ribosomal subunit. Forms a cluster with proteins L14 and L19.

One of the primary rRNA binding proteins, it binds directly near the 3'-end of the 23S rRNA, where it nucleates assembly of the 50S subunit. In Brachyspira pilosicoli (Serpulina pilosicoli), this protein is Large ribosomal subunit protein uL3.